We begin with the raw amino-acid sequence, 417 residues long: Serine hydroxymethyltransferase (417 aa).

(6S)-5,6,7,8-tetrahydrofolate-binding positions include Leu-121 and 125–127 (GHL). An N6-(pyridoxal phosphate)lysine modification is found at Lys-229. Residue 354–356 (SPF) coordinates (6S)-5,6,7,8-tetrahydrofolate.

It belongs to the SHMT family. As to quaternary structure, homodimer. Requires pyridoxal 5'-phosphate as cofactor.

It localises to the cytoplasm. The catalysed reaction is (6R)-5,10-methylene-5,6,7,8-tetrahydrofolate + glycine + H2O = (6S)-5,6,7,8-tetrahydrofolate + L-serine. It functions in the pathway one-carbon metabolism; tetrahydrofolate interconversion. It participates in amino-acid biosynthesis; glycine biosynthesis; glycine from L-serine: step 1/1. Catalyzes the reversible interconversion of serine and glycine with tetrahydrofolate (THF) serving as the one-carbon carrier. This reaction serves as the major source of one-carbon groups required for the biosynthesis of purines, thymidylate, methionine, and other important biomolecules. Also exhibits THF-independent aldolase activity toward beta-hydroxyamino acids, producing glycine and aldehydes, via a retro-aldol mechanism. The chain is Serine hydroxymethyltransferase from Stutzerimonas stutzeri (strain A1501) (Pseudomonas stutzeri).